A 376-amino-acid polypeptide reads, in one-letter code: Protein RecA (376 aa).

Gly-78–Thr-85 is an ATP binding site. Residues Pro-355–Asp-376 form a disordered region. Over residues Asp-363–Asp-376 the composition is skewed to acidic residues.

This sequence belongs to the RecA family.

It is found in the cytoplasm. Its function is as follows. Can catalyze the hydrolysis of ATP in the presence of single-stranded DNA, the ATP-dependent uptake of single-stranded DNA by duplex DNA, and the ATP-dependent hybridization of homologous single-stranded DNAs. It interacts with LexA causing its activation and leading to its autocatalytic cleavage. This chain is Protein RecA, found in Corynebacterium glutamicum (strain R).